A 696-amino-acid chain; its full sequence is Glutamate-rich protein 6B (696 aa).

Residues 1 to 10 (MSAENNQLSG) show a composition bias toward polar residues. The interval 1–105 (MSAENNQLSG…EYLEKAGYLE (105 aa)) is disordered. Acidic residues-rich tracts occupy residues 32–44 (EDTE…ESLQ) and 54–72 (ESLE…EEEE). Residues 73–91 (YLGKEEYLKEEEYLGKEEH) show a composition bias toward basic and acidic residues.

Belongs to the ERICH6 family.

This is Glutamate-rich protein 6B (ERICH6B) from Homo sapiens (Human).